The following is a 251-amino-acid chain: Triosephosphate isomerase (251 aa).

9-11 lines the substrate pocket; it reads NWK. Residue His-95 is the Electrophile of the active site. Glu-167 serves as the catalytic Proton acceptor. Substrate-binding positions include Gly-173, Ser-213, and 234-235; that span reads GG. Ser-213 is modified (phosphoserine).

The protein belongs to the triosephosphate isomerase family. In terms of assembly, homodimer.

The protein resides in the cytoplasm. It catalyses the reaction D-glyceraldehyde 3-phosphate = dihydroxyacetone phosphate. Its pathway is carbohydrate biosynthesis; gluconeogenesis. The protein operates within carbohydrate degradation; glycolysis; D-glyceraldehyde 3-phosphate from glycerone phosphate: step 1/1. Involved in the gluconeogenesis. Catalyzes stereospecifically the conversion of dihydroxyacetone phosphate (DHAP) to D-glyceraldehyde-3-phosphate (G3P). This chain is Triosephosphate isomerase, found in Bacillus anthracis.